Consider the following 523-residue polypeptide: Succinate-semialdehyde dehydrogenase, mitochondrial (523 aa).

A mitochondrion-targeting transit peptide spans 1 to 35; it reads MATCFLLRNFCAARPALRPPGRLLREPAGAQRRSY. K114 is modified (N6-acetyllysine; alternate). An N6-succinyllysine; alternate modification is found at K114. N6-succinyllysine occurs at positions 123 and 172. Residues R201 and 216 to 219 contribute to the NAD(+) site; that span reads KPAE. R201 serves as a coordination point for substrate. K253 is subject to N6-acetyllysine; alternate. K253 carries the N6-succinyllysine; alternate modification. Residue 272–277 coordinates NAD(+); the sequence is GSTATG. E294 functions as the Proton acceptor in the catalytic mechanism. R322 lines the substrate pocket. The Nucleophile role is filled by C328. A disulfide bridge connects residues C328 and C330. At K353 the chain carries N6-acetyllysine. Residue K390 is modified to N6-succinyllysine. An N6-acetyllysine modification is found at K399. A substrate-binding site is contributed by S486. Phosphoserine is present on S487.

It belongs to the aldehyde dehydrogenase family. In terms of assembly, homotetramer. In terms of tissue distribution, brain, pancreas, heart, liver, skeletal muscle, kidney. Lower in spleen, lung, kidney and testis.

It is found in the mitochondrion. It carries out the reaction succinate semialdehyde + NAD(+) + H2O = succinate + NADH + 2 H(+). The protein operates within amino-acid degradation; 4-aminobutanoate degradation. With respect to regulation, redox-regulated. Inhibited under oxydizing conditions. In terms of biological role, catalyzes one step in the degradation of the inhibitory neurotransmitter gamma-aminobutyric acid (GABA). This is Succinate-semialdehyde dehydrogenase, mitochondrial (Aldh5a1) from Rattus norvegicus (Rat).